Here is a 148-residue protein sequence, read N- to C-terminus: Aspartate 1-decarboxylase (148 aa).

The active-site Schiff-base intermediate with substrate; via pyruvic acid is the Ser-25. Pyruvic acid (Ser) is present on Ser-25. Thr-57 lines the substrate pocket. Tyr-58 functions as the Proton donor in the catalytic mechanism. 73 to 75 (GAA) serves as a coordination point for substrate.

The protein belongs to the PanD family. In terms of assembly, heterooctamer of four alpha and four beta subunits. Pyruvate is required as a cofactor. Is synthesized initially as an inactive proenzyme, which is activated by self-cleavage at a specific serine bond to produce a beta-subunit with a hydroxyl group at its C-terminus and an alpha-subunit with a pyruvoyl group at its N-terminus.

The protein localises to the cytoplasm. The catalysed reaction is L-aspartate + H(+) = beta-alanine + CO2. It functions in the pathway cofactor biosynthesis; (R)-pantothenate biosynthesis; beta-alanine from L-aspartate: step 1/1. Its function is as follows. Catalyzes the pyruvoyl-dependent decarboxylation of aspartate to produce beta-alanine. This chain is Aspartate 1-decarboxylase, found in Rhodococcus opacus (strain B4).